The following is a 343-amino-acid chain: MEVDPQLRFLLKPILEWLDDPKTEEIAINRPGEAFVRQAGIFTKMPLPVSYDDLEDIAILAGALRKQDVGPRNPLCATELPGGERLQICLPPTVPSGTVSLTIRRPSSRVSGLKEVSSRYDASRWNQWQTRRKRQNQDDEAILQHFDNGDLEAFLHACVVSRLTMLLCGPTGSGKTTMSKTLISAIPPQERLITIEDTLELVIPHDNHVRLLYSKNGAGLGAVSAEHLLQASLRMRPDRILLGEMRDDAAWAYLSEVVSGHPGSISTIHGANPIQGFKKLFSLVKSSVQGASLEDRTLIDMLSTAIDVIIPFRAYEDVYEVGEIWLAADARRRGETIGDLLNQ.

169-176 (GPTGSGKT) lines the ATP pocket.

The protein belongs to the GSP E family. In terms of processing, autophosphorylated.

The protein localises to the cytoplasm. Functionally, required for the transfer of T-DNA to plants. Couples energy, by means of ATP hydrolysis, to T-DNA transport. In Agrobacterium tumefaciens (strain 15955), this protein is Protein VirB11 (virB11).